A 382-amino-acid chain; its full sequence is GDP-mannose-dependent alpha-(1-6)-phosphatidylinositol monomannoside mannosyltransferase (382 aa).

GDP-alpha-D-mannose-binding residues include Arg-200, Lys-205, Ile-257, and Glu-294.

It belongs to the glycosyltransferase group 1 family. Glycosyltransferase 4 subfamily.

The enzyme catalyses a 1,2-diacyl-sn-glycero-3-phospho-[alpha-D-mannopyranosyl-(1&lt;-&gt;6)-D-myo-inositol] + GDP-alpha-D-mannose = a 2,6-O-bis(alpha-D-mannopyranosyl)-1-phosphatidyl-1D-myo-inositol + GDP + H(+). It carries out the reaction a 1,2-diacyl-sn-glycero-3-phospho-[alpha-D-6-acyl-mannopyranosyl-(1&lt;-&gt;6)-D-myo-inositol] + GDP-alpha-D-mannose = a 2-O-(alpha-D-mannosyl)-6-O-(6-O-acyl-alpha-D-mannosyl)-1-phosphatidyl-1D-myo-inositol + GDP + H(+). Its pathway is phospholipid metabolism; phosphatidylinositol metabolism. In terms of biological role, involved in the biosynthesis of phosphatidyl-myo-inositol mannosides (PIM) which are early precursors in the biosynthesis of lipomannans (LM) and lipoarabinomannans (LAM). Catalyzes the addition of a mannosyl residue from GDP-D-mannose (GDP-Man) to the position 6 of a phosphatidyl-myo-inositol bearing an alpha-1,2-linked mannose residue (PIM1) to generate phosphatidyl-myo-inositol bearing alpha-1,2- and alpha-1,6-linked mannose residues (Ac1PIM2). PimB also catalyzes the addition of a mannosyl residue from GDP-Man to the position 6 of phosphatidyl-myo-inositol bearing an acylated alpha-1,2-linked mannose residue (Ac1PIM1) to generate monoacylated phosphatidyl-myo-inositol bearing alpha-1,2- and alpha-1,6-linked mannose residues (Ac1PIM2). The addition of the second mannosyl residue by PimB preferentially occurs before the acylation of the mannosyl residue transferred by PimA. Also able to transfer a mannosyl residue from GDP-Man to the position 6 of a phosphatidyl-myo-inositol (PI), but this reaction is very slow. This is GDP-mannose-dependent alpha-(1-6)-phosphatidylinositol monomannoside mannosyltransferase from Mycolicibacterium smegmatis (strain ATCC 700084 / mc(2)155) (Mycobacterium smegmatis).